A 642-amino-acid polypeptide reads, in one-letter code: Threonine--tRNA ligase (642 aa).

The 61-residue stretch at 1–61 (MPVITLPDGS…DTDAQLAIIT (61 aa)) folds into the TGS domain. Positions 243-534 (DHRKIGKQLD…LTEEFAGFFP (292 aa)) are catalytic. Cys334, His385, and His511 together coordinate Zn(2+).

This sequence belongs to the class-II aminoacyl-tRNA synthetase family. In terms of assembly, homodimer. It depends on Zn(2+) as a cofactor.

It is found in the cytoplasm. The catalysed reaction is tRNA(Thr) + L-threonine + ATP = L-threonyl-tRNA(Thr) + AMP + diphosphate + H(+). Catalyzes the attachment of threonine to tRNA(Thr) in a two-step reaction: L-threonine is first activated by ATP to form Thr-AMP and then transferred to the acceptor end of tRNA(Thr). Also edits incorrectly charged L-seryl-tRNA(Thr). In Pectobacterium carotovorum subsp. carotovorum (strain PC1), this protein is Threonine--tRNA ligase.